Reading from the N-terminus, the 568-residue chain is CDK5 and ABL1 enzyme substrate 1 (568 aa).

Low complexity predominate over residues 1–31 (MAAATATAGTAACSSSSSSRGGSTDAAATSG). 2 disordered regions span residues 1–94 (MAAA…PGAR) and 130–169 (PSLV…QEEL). An interaction with TDRD7 region spans residues 1–98 (MAAATATAGT…TKPGARARLS (98 aa)). A compositionally biased stretch (pro residues) spans 33–45 (QPPPPPPATAPPE). Over residues 46–56 (PLRKPRMDPRR) the composition is skewed to basic and acidic residues. The interaction with CDK3 stretch occupies residues 140–427 (PSQPPRSAPA…TTVIDYVKPS (288 aa)). Ser248 carries the post-translational modification Phosphoserine. The residue at position 274 (Ser274) is a Phosphoserine; by CDK2 and CDK3. Thr350 carries the phosphothreonine modification.

This sequence belongs to the cyclin family. In terms of assembly, found in a complex with p53/TP53. Found in a number of complexes with CDK2, CDK3, CDK5, ABL1, TDRD7, CDK17, CCNA1, CCNE1 and TP73. Interacts with CDK2, CDK3, CDK5, ABL1 and TDRD7. Post-translationally, phosphorylated on Ser-274 by CCNE1/CDK3. Phosphorylated on serine/threonine residues by CDK5 and on tyrosine residues by ABL1. Also phosphorylated in vitro by CCNA1/CDK2, CCNE1/CDK2, CCNA1/CDK3 and CCNE1/CDK3. As to expression, ubiquitous. Expressed in postnatal day 1 (P1), in postmitotic neurons of the subplate, cortex (V/VI) and marginal zone; in postnatal day 7 (P7), in all layers of the cerebral cortex and in the CA1 and CA2 regions of the hippocampus (at protein level). Highly expressed in brain, kidney, liver and lung.

It localises to the nucleus. Its subcellular location is the cytoplasm. It is found in the cell projection. The protein localises to the growth cone. Its function is as follows. Cyclin-dependent kinase binding protein. Enhances cyclin-dependent kinase tyrosine phosphorylation by nonreceptor tyrosine kinases, such as that of CDK5 by activated ABL1, which leads to increased CDK5 activity and is critical for neuronal development, and that of CDK2 by WEE1, which leads to decreased CDK2 activity and growth inhibition. Positively affects neuronal outgrowth. Plays a role as a regulator for p53/p73-induced cell death. The protein is CDK5 and ABL1 enzyme substrate 1 (Cables1) of Mus musculus (Mouse).